Reading from the N-terminus, the 166-residue chain is Large ribosomal subunit protein mL49 (166 aa).

Residues 56-78 (RIPDPPKHEHYPTPSGWQPPRDP) form a disordered region.

This sequence belongs to the mitochondrion-specific ribosomal protein mL49 family. As to quaternary structure, interacts with OXA1L.

It localises to the mitochondrion. The polypeptide is Large ribosomal subunit protein mL49 (MRPL49) (Macaca fascicularis (Crab-eating macaque)).